Reading from the N-terminus, the 420-residue chain is Histidine--tRNA ligase (420 aa).

The protein belongs to the class-II aminoacyl-tRNA synthetase family. As to quaternary structure, homodimer.

It localises to the cytoplasm. It carries out the reaction tRNA(His) + L-histidine + ATP = L-histidyl-tRNA(His) + AMP + diphosphate + H(+). This Anaplasma phagocytophilum (strain HZ) protein is Histidine--tRNA ligase.